Reading from the N-terminus, the 636-residue chain is Chaperone protein DnaK (636 aa).

Thr198 carries the post-translational modification Phosphothreonine; by autocatalysis. Positions 598–636 (YAAKEQPGEHGETGSGEQARKESGKDENVVDADFEEVKK) are disordered. Positions 603 to 625 (QPGEHGETGSGEQARKESGKDEN) are enriched in basic and acidic residues. The span at 626–636 (VVDADFEEVKK) shows a compositional bias: acidic residues.

The protein belongs to the heat shock protein 70 family.

Functionally, acts as a chaperone. This is Chaperone protein DnaK from Pelobacter propionicus (strain DSM 2379 / NBRC 103807 / OttBd1).